A 361-amino-acid polypeptide reads, in one-letter code: tRNA/tmRNA (uracil-C(5))-methyltransferase (361 aa).

S-adenosyl-L-methionine contacts are provided by Gln-185, Tyr-213, Asn-218, Glu-234, and Asp-294. The active-site Nucleophile is Cys-319. Glu-353 acts as the Proton acceptor in catalysis.

This sequence belongs to the class I-like SAM-binding methyltransferase superfamily. RNA M5U methyltransferase family. TrmA subfamily.

It carries out the reaction uridine(54) in tRNA + S-adenosyl-L-methionine = 5-methyluridine(54) in tRNA + S-adenosyl-L-homocysteine + H(+). It catalyses the reaction uridine(341) in tmRNA + S-adenosyl-L-methionine = 5-methyluridine(341) in tmRNA + S-adenosyl-L-homocysteine + H(+). Dual-specificity methyltransferase that catalyzes the formation of 5-methyluridine at position 54 (m5U54) in all tRNAs, and that of position 341 (m5U341) in tmRNA (transfer-mRNA). The protein is tRNA/tmRNA (uracil-C(5))-methyltransferase of Pseudomonas syringae pv. syringae (strain B728a).